A 210-amino-acid chain; its full sequence is Outer-membrane lipoprotein LolB (210 aa).

Residues 1 to 18 (MKKLTKLLSLTLLFALAG) form the signal peptide. The N-palmitoyl cysteine moiety is linked to residue cysteine 19. Cysteine 19 is lipidated: S-diacylglycerol cysteine.

Belongs to the LolB family. In terms of assembly, monomer.

Its subcellular location is the cell outer membrane. Plays a critical role in the incorporation of lipoproteins in the outer membrane after they are released by the LolA protein. In Glaesserella parasuis serovar 5 (strain SH0165) (Haemophilus parasuis), this protein is Outer-membrane lipoprotein LolB.